Here is a 545-residue protein sequence, read N- to C-terminus: CTP synthase (545 aa).

The interval 1 to 266 (MKTKFIFITG…DQKIAIMLKL (266 aa)) is amidoligase domain. A CTP-binding site is contributed by Ser-14. Residue Ser-14 coordinates UTP. ATP-binding positions include 15 to 20 (SLGKGL) and Asp-72. Mg(2+) contacts are provided by Asp-72 and Glu-140. CTP is bound by residues 147 to 149 (DIE), 187 to 192 (KTKPTQ), and Lys-223. Residues 187–192 (KTKPTQ) and Lys-223 contribute to the UTP site. In terms of domain architecture, Glutamine amidotransferase type-1 spans 291–545 (TIGIVGKYVD…IKASCENKNK (255 aa)). Gly-353 serves as a coordination point for L-glutamine. Cys-380 (nucleophile; for glutamine hydrolysis) is an active-site residue. L-glutamine-binding positions include 381–384 (LGMQ), Glu-404, and Arg-472. Catalysis depends on residues His-518 and Glu-520.

This sequence belongs to the CTP synthase family. As to quaternary structure, homotetramer.

It catalyses the reaction UTP + L-glutamine + ATP + H2O = CTP + L-glutamate + ADP + phosphate + 2 H(+). The enzyme catalyses L-glutamine + H2O = L-glutamate + NH4(+). It carries out the reaction UTP + NH4(+) + ATP = CTP + ADP + phosphate + 2 H(+). Its pathway is pyrimidine metabolism; CTP biosynthesis via de novo pathway; CTP from UDP: step 2/2. Its activity is regulated as follows. Allosterically activated by GTP, when glutamine is the substrate; GTP has no effect on the reaction when ammonia is the substrate. The allosteric effector GTP functions by stabilizing the protein conformation that binds the tetrahedral intermediate(s) formed during glutamine hydrolysis. Inhibited by the product CTP, via allosteric rather than competitive inhibition. Catalyzes the ATP-dependent amination of UTP to CTP with either L-glutamine or ammonia as the source of nitrogen. Regulates intracellular CTP levels through interactions with the four ribonucleotide triphosphates. This chain is CTP synthase, found in Maridesulfovibrio salexigens (strain ATCC 14822 / DSM 2638 / NCIMB 8403 / VKM B-1763) (Desulfovibrio salexigens).